A 725-amino-acid polypeptide reads, in one-letter code: Glutamine-dependent NAD(+) synthetase (725 aa).

The 271-residue stretch at 4-274 (LKVATCNLNQ…VEVIISQVDL (271 aa)) folds into the CN hydrolase domain. The Proton acceptor; for glutaminase activity role is filled by E44. The For glutaminase activity role is filled by K113. C174 functions as the Nucleophile; for glutaminase activity in the catalytic mechanism. The interval 324–709 (YHSPQEEIAF…FPEEEANSNK (386 aa)) is ligase. Residue 354–361 (PLSGGADS) coordinates ATP. S356 is an active-site residue.

In the C-terminal section; belongs to the NAD synthetase family.

The catalysed reaction is deamido-NAD(+) + L-glutamine + ATP + H2O = L-glutamate + AMP + diphosphate + NAD(+) + H(+). The protein operates within cofactor biosynthesis; NAD(+) biosynthesis; NAD(+) from deamido-NAD(+) (L-Gln route): step 1/1. The sequence is that of Glutamine-dependent NAD(+) synthetase from Arabidopsis thaliana (Mouse-ear cress).